The sequence spans 176 residues: Conidiation-specific protein 8 (176 aa).

Disordered stretches follow at residues Met1–Ile66 and Ala79–Phe162. The segment covering Ala79–Thr99 has biased composition (low complexity).

This chain is Conidiation-specific protein 8 (con-8), found in Neurospora crassa (strain ATCC 24698 / 74-OR23-1A / CBS 708.71 / DSM 1257 / FGSC 987).